The sequence spans 469 residues: Neuraminidase (469 aa).

Residues 1 to 6 (MNPNQK) are Intravirion-facing. A helical transmembrane segment spans residues 7–29 (IITIGSVSLTIATVCSLMQIAIL). Residues 11–33 (GSVSLTIATVCSLMQIAILATTV) are involved in apical transport and lipid raft association. Over 30–469 (ATTVTLHFKQ…DGANINFMPI (440 aa)) the chain is Virion surface. Residues 36-88 (HFKQHECDSPASNQVMPCEPIIIERNITEIVYLNNTTIEKEICPEVVEYRNWS) are hypervariable stalk region. N-linked (GlcNAc...) asparagine; by host glycans are attached at residues Asn61, Asn69, Asn70, and Asn86. The segment at 91–469 (QCQITGFAPF…DGANINFMPI (379 aa)) is head of neuraminidase. 8 disulfide bridges follow: Cys92–Cys417, Cys124–Cys129, Cys183–Cys230, Cys232–Cys237, Cys278–Cys291, Cys280–Cys289, Cys318–Cys337, and Cys421–Cys447. Arg118 contacts substrate. N-linked (GlcNAc...) asparagine; by host glycosylation is present at Asn146. Asp151 (proton donor/acceptor) is an active-site residue. Arg152 lines the substrate pocket. N-linked (GlcNAc...) asparagine; by host glycans are attached at residues Asn200 and Asn234. Residue 276 to 277 (EE) coordinates substrate. Arg292 serves as a coordination point for substrate. Residues Asp293, Gly297, and Asp324 each coordinate Ca(2+). A disordered region spans residues 325–349 (TPRNDDSSSNSNCRDPNNERGNPGV). Arg371 is a substrate binding site. A glycan (N-linked (GlcNAc...) asparagine; by host) is linked at Asn402. The Nucleophile role is filled by Tyr406.

This sequence belongs to the glycosyl hydrolase 34 family. As to quaternary structure, homotetramer. The cofactor is Ca(2+). In terms of processing, N-glycosylated.

Its subcellular location is the virion membrane. The protein localises to the host apical cell membrane. The catalysed reaction is Hydrolysis of alpha-(2-&gt;3)-, alpha-(2-&gt;6)-, alpha-(2-&gt;8)- glycosidic linkages of terminal sialic acid residues in oligosaccharides, glycoproteins, glycolipids, colominic acid and synthetic substrates.. Its activity is regulated as follows. Inhibited by the neuraminidase inhibitors zanamivir (Relenza) and oseltamivir (Tamiflu). These drugs interfere with the release of progeny virus from infected cells and are effective against all influenza strains. Resistance to neuraminidase inhibitors is quite rare. Catalyzes the removal of terminal sialic acid residues from viral and cellular glycoconjugates. Cleaves off the terminal sialic acids on the glycosylated HA during virus budding to facilitate virus release. Additionally helps virus spread through the circulation by further removing sialic acids from the cell surface. These cleavages prevent self-aggregation and ensure the efficient spread of the progeny virus from cell to cell. Otherwise, infection would be limited to one round of replication. Described as a receptor-destroying enzyme because it cleaves a terminal sialic acid from the cellular receptors. May facilitate viral invasion of the upper airways by cleaving the sialic acid moieties on the mucin of the airway epithelial cells. Likely to plays a role in the budding process through its association with lipid rafts during intracellular transport. May additionally display a raft-association independent effect on budding. Plays a role in the determination of host range restriction on replication and virulence. Sialidase activity in late endosome/lysosome traffic seems to enhance virus replication. The polypeptide is Neuraminidase (Influenza A virus (strain A/Leningrad/134/17/1957 H2N2)).